The chain runs to 377 residues: Nitric oxide reductase FlRd-NAD(+) reductase (377 aa).

The protein belongs to the FAD-dependent oxidoreductase family. It depends on FAD as a cofactor.

The protein localises to the cytoplasm. It carries out the reaction 2 reduced [nitric oxide reductase rubredoxin domain] + NAD(+) + H(+) = 2 oxidized [nitric oxide reductase rubredoxin domain] + NADH. The protein operates within nitrogen metabolism; nitric oxide reduction. Functionally, one of at least two accessory proteins for anaerobic nitric oxide (NO) reductase. Reduces the rubredoxin moiety of NO reductase. This is Nitric oxide reductase FlRd-NAD(+) reductase from Shigella sonnei (strain Ss046).